The chain runs to 508 residues: GATA zinc finger domain-containing protein 13 (508 aa).

Disordered regions lie at residues 20 to 51 (YSKN…INNN) and 203 to 296 (MSII…PEIE). Positions 23 to 51 (NNNNNNNNNNNNNINNNNNNNNNNNINNN) are enriched in low complexity. Polar residues predominate over residues 203-224 (MSIIPSDNFPTPQLPLETNTDL). The span at 225 to 247 (NNTSDCSSTTFSSPPSSAFNSPN) shows a compositional bias: low complexity. Over residues 248 to 266 (LQNDYTQPQNQKSQSSTIV) the composition is skewed to polar residues. The segment covering 269–279 (NSSKSKSKNNK) has biased composition (basic residues). A GATA-type zinc finger spans residues 327–354 (CSICKIKCSIYWRRILINEVRTSVCNAC). Positions 356 to 433 (LRTMKKTKKE…NNNNNNNNNN (78 aa)) form a coiled coil. The segment covering 399–482 (TTTTTTTTTS…NNNNNDNYND (84 aa)) has biased composition (low complexity). The interval 399–484 (TTTTTTTTTS…NNNDNYNDSI (86 aa)) is disordered.

This is GATA zinc finger domain-containing protein 13 (gtaM) from Dictyostelium discoideum (Social amoeba).